Here is a 226-residue protein sequence, read N- to C-terminus: MSKINNDWKEILEEEFEKEYFIKLKETLEEEYKNYTVYPPKRDILNAFFLTPYSEVKVVLLGQDPYHQRGQAHGLAFSVNYEIKTPPSLVNMYKELQDDLGLYIPNNGFLEKWSKQGVLLLNTTLTVRDSEANSHSKIGWQTFTDNVIKSLNEREKPVIFILWGNNAKSKEKFIDTNKHYILKGVHPSPLSANKGFFGCKHFSEANRILKNLGEKEIDWQIENKEI.

Asp64 (proton acceptor) is an active-site residue.

It belongs to the uracil-DNA glycosylase (UDG) superfamily. UNG family.

The protein localises to the cytoplasm. The enzyme catalyses Hydrolyzes single-stranded DNA or mismatched double-stranded DNA and polynucleotides, releasing free uracil.. In terms of biological role, excises uracil residues from the DNA which can arise as a result of misincorporation of dUMP residues by DNA polymerase or due to deamination of cytosine. This Fusobacterium nucleatum subsp. nucleatum (strain ATCC 25586 / DSM 15643 / BCRC 10681 / CIP 101130 / JCM 8532 / KCTC 2640 / LMG 13131 / VPI 4355) protein is Uracil-DNA glycosylase.